The sequence spans 247 residues: Probable transcriptional regulatory protein BT_0627 (247 aa).

It belongs to the TACO1 family.

Its subcellular location is the cytoplasm. The chain is Probable transcriptional regulatory protein BT_0627 from Bacteroides thetaiotaomicron (strain ATCC 29148 / DSM 2079 / JCM 5827 / CCUG 10774 / NCTC 10582 / VPI-5482 / E50).